Consider the following 37-residue polypeptide: Protein 6.3 (37 aa).

The polypeptide is Protein 6.3 (Escherichia phage T7 (Bacteriophage T7)).